The chain runs to 234 residues: Sugar fermentation stimulation protein homolog (234 aa).

This sequence belongs to the SfsA family.

The chain is Sugar fermentation stimulation protein homolog from Shewanella baltica (strain OS155 / ATCC BAA-1091).